Consider the following 152-residue polypeptide: MKTFTAKPADIEKKWILIDAEGIVLGRLASIVATRLRGKHKATFTPHMDMGDNVIVINADKIQLTGNKRNKPNYWHTGYPGGIKSRTTGQILEGKFPERVVTQAVKRMLPGGPLSRQQMTNLRVYAGAEHPHEAQSPEVLDLASKNPKNTRS.

The tract at residues 130–152 is disordered; sequence HPHEAQSPEVLDLASKNPKNTRS.

It belongs to the universal ribosomal protein uL13 family. As to quaternary structure, part of the 50S ribosomal subunit.

In terms of biological role, this protein is one of the early assembly proteins of the 50S ribosomal subunit, although it is not seen to bind rRNA by itself. It is important during the early stages of 50S assembly. This Dinoroseobacter shibae (strain DSM 16493 / NCIMB 14021 / DFL 12) protein is Large ribosomal subunit protein uL13.